A 358-amino-acid chain; its full sequence is Probable branched-chain-amino-acid aminotransferase (358 aa).

K196 carries the post-translational modification N6-(pyridoxal phosphate)lysine.

The protein belongs to the class-IV pyridoxal-phosphate-dependent aminotransferase family. Requires pyridoxal 5'-phosphate as cofactor.

The enzyme catalyses L-leucine + 2-oxoglutarate = 4-methyl-2-oxopentanoate + L-glutamate. It carries out the reaction L-isoleucine + 2-oxoglutarate = (S)-3-methyl-2-oxopentanoate + L-glutamate. It catalyses the reaction L-valine + 2-oxoglutarate = 3-methyl-2-oxobutanoate + L-glutamate. It participates in amino-acid biosynthesis; L-isoleucine biosynthesis; L-isoleucine from 2-oxobutanoate: step 4/4. The protein operates within amino-acid biosynthesis; L-leucine biosynthesis; L-leucine from 3-methyl-2-oxobutanoate: step 4/4. Its pathway is amino-acid biosynthesis; L-valine biosynthesis; L-valine from pyruvate: step 4/4. Functionally, acts on leucine, isoleucine and valine. This chain is Probable branched-chain-amino-acid aminotransferase (ilvE), found in Staphylococcus epidermidis (strain ATCC 35984 / DSM 28319 / BCRC 17069 / CCUG 31568 / BM 3577 / RP62A).